A 584-amino-acid polypeptide reads, in one-letter code: Pentalenolactone D synthase (584 aa).

FAD contacts are provided by residues isoleucine 55–glycine 56, aspartate 77–glycine 78, threonine 85–tryptophan 86, aspartate 97–valine 98, tyrosine 103, valine 147, and methionine 486.

This sequence belongs to the FAD-binding monooxygenase family. Requires FAD as cofactor.

The enzyme catalyses 1-deoxy-11-oxopentalenate + NADPH + O2 + H(+) = pentalenolactone D + NADP(+) + H2O. The protein operates within antibiotic biosynthesis; pentalenolactone biosynthesis. Its function is as follows. Catalyzes the flavin-dependent Baeyer-Villiger oxidation of 1-deoxy-11-oxopentalenic acid to pentalenolactone D in the biosynthesis of pentalenolactone antibiotic. The protein is Pentalenolactone D synthase (penE) of Streptomyces exfoliatus (Streptomyces hydrogenans).